We begin with the raw amino-acid sequence, 315 residues long: Acetyl-coenzyme A carboxylase carboxyl transferase subunit alpha (315 aa).

The CoA carboxyltransferase C-terminal domain maps to 36 to 289; sequence LGKKRLELME…RKAVAAELKV (254 aa).

It belongs to the AccA family. As to quaternary structure, acetyl-CoA carboxylase is a heterohexamer composed of biotin carboxyl carrier protein (AccB), biotin carboxylase (AccC) and two subunits each of ACCase subunit alpha (AccA) and ACCase subunit beta (AccD).

The protein resides in the cytoplasm. It carries out the reaction N(6)-carboxybiotinyl-L-lysyl-[protein] + acetyl-CoA = N(6)-biotinyl-L-lysyl-[protein] + malonyl-CoA. Its pathway is lipid metabolism; malonyl-CoA biosynthesis; malonyl-CoA from acetyl-CoA: step 1/1. Component of the acetyl coenzyme A carboxylase (ACC) complex. First, biotin carboxylase catalyzes the carboxylation of biotin on its carrier protein (BCCP) and then the CO(2) group is transferred by the carboxyltransferase to acetyl-CoA to form malonyl-CoA. The sequence is that of Acetyl-coenzyme A carboxylase carboxyl transferase subunit alpha from Francisella philomiragia subsp. philomiragia (strain ATCC 25017 / CCUG 19701 / FSC 153 / O#319-036).